A 392-amino-acid polypeptide reads, in one-letter code: Cyclic di-GMP phosphodiesterase RocR (392 aa).

Positions 5–126 (NVLVLEDEPF…RITALLTRYN (122 aa)) constitute a Response regulatory domain. The residue at position 56 (Asp-56) is a 4-aspartylphosphate. The EAL domain occupies 140 to 392 (ELPSVADVVR…QHFLDYCSGS (253 aa)). The Mg(2+) site is built by Glu-175, Asn-233, Glu-265, and Asp-295. Glu-352 serves as the catalytic Proton acceptor.

In terms of assembly, homotetramer. Exhibits a highly unusual tetrameric structure arranged around a single dyad, with the four subunits adopting two distinctly different conformations, with only two active sites accessible for substrate binding. Interacts with RocS1. The cofactor is Mg(2+).

The enzyme catalyses 3',3'-c-di-GMP + H2O = 5'-phosphoguanylyl(3'-&gt;5')guanosine + H(+). With respect to regulation, phosphorylation of Asp-56 probably induces local conformational changes in the response regulatory domain. These structural changes are transmitted to the adjacent EAL domain, then the signal is further transmitted down to the active site. The phosphodiesterase activity is inhibited by Ca(2+) and Zn(2+). Phosphodiesterase activity is inhibited by a benzoisothiazolinone derivative that specifically inhibited RocR, but not some other phosphodiesterases. Functionally, phosphodiesterase (PDE) that catalyzes the hydrolysis of cyclic diguanylate (c-di-GMP) to 5'-pGpG. Cannot use cyclic AMP or cyclic GMP. Part of the RocSAR two-component regulatory signaling system (also known as the SadARS system), which regulates biofilm maturation, type III secretion and expression of the cup fimbrial-gene cluster. Negatively regulates the expression of cup genes by antagonizing the activity of RocA1. The polypeptide is Cyclic di-GMP phosphodiesterase RocR (Pseudomonas aeruginosa (strain ATCC 15692 / DSM 22644 / CIP 104116 / JCM 14847 / LMG 12228 / 1C / PRS 101 / PAO1)).